Reading from the N-terminus, the 205-residue chain is Probable nicotinate-nucleotide adenylyltransferase (205 aa).

The protein belongs to the NadD family.

The catalysed reaction is nicotinate beta-D-ribonucleotide + ATP + H(+) = deamido-NAD(+) + diphosphate. The protein operates within cofactor biosynthesis; NAD(+) biosynthesis; deamido-NAD(+) from nicotinate D-ribonucleotide: step 1/1. In terms of biological role, catalyzes the reversible adenylation of nicotinate mononucleotide (NaMN) to nicotinic acid adenine dinucleotide (NaAD). The chain is Probable nicotinate-nucleotide adenylyltransferase from Nocardioides sp. (strain ATCC BAA-499 / JS614).